The sequence spans 432 residues: 3-phosphoshikimate 1-carboxyvinyltransferase (432 aa).

3 residues coordinate 3-phosphoshikimate: Lys-23, Ser-24, and Arg-28. A phosphoenolpyruvate-binding site is contributed by Lys-23. Residues Gly-95 and Arg-123 each coordinate phosphoenolpyruvate. The 3-phosphoshikimate site is built by Ser-167, Gln-169, Asp-317, and Lys-344. Gln-169 contributes to the phosphoenolpyruvate binding site. Asp-317 serves as the catalytic Proton acceptor. The phosphoenolpyruvate site is built by Arg-348 and Arg-390.

Belongs to the EPSP synthase family. In terms of assembly, monomer.

It is found in the cytoplasm. The catalysed reaction is 3-phosphoshikimate + phosphoenolpyruvate = 5-O-(1-carboxyvinyl)-3-phosphoshikimate + phosphate. The protein operates within metabolic intermediate biosynthesis; chorismate biosynthesis; chorismate from D-erythrose 4-phosphate and phosphoenolpyruvate: step 6/7. In terms of biological role, catalyzes the transfer of the enolpyruvyl moiety of phosphoenolpyruvate (PEP) to the 5-hydroxyl of shikimate-3-phosphate (S3P) to produce enolpyruvyl shikimate-3-phosphate and inorganic phosphate. The sequence is that of 3-phosphoshikimate 1-carboxyvinyltransferase from Staphylococcus aureus (strain MRSA252).